The primary structure comprises 251 residues: Methionine aminopeptidase (251 aa).

His79 contributes to the substrate binding site. Positions 96, 107, and 170 each coordinate a divalent metal cation. Substrate is bound at residue His177. A divalent metal cation-binding residues include Glu204 and Glu235.

It belongs to the peptidase M24A family. Methionine aminopeptidase type 1 subfamily. Monomer. It depends on Co(2+) as a cofactor. Requires Zn(2+) as cofactor. The cofactor is Mn(2+). Fe(2+) is required as a cofactor.

It catalyses the reaction Release of N-terminal amino acids, preferentially methionine, from peptides and arylamides.. Removes the N-terminal methionine from nascent proteins. The N-terminal methionine is often cleaved when the second residue in the primary sequence is small and uncharged (Met-Ala-, Cys, Gly, Pro, Ser, Thr, or Val). Requires deformylation of the N(alpha)-formylated initiator methionine before it can be hydrolyzed. This Borreliella burgdorferi (strain ATCC 35210 / DSM 4680 / CIP 102532 / B31) (Borrelia burgdorferi) protein is Methionine aminopeptidase.